Here is a 346-residue protein sequence, read N- to C-terminus: Phosphoribosylformylglycinamidine cyclo-ligase (346 aa).

This sequence belongs to the AIR synthase family.

Its subcellular location is the cytoplasm. It catalyses the reaction 2-formamido-N(1)-(5-O-phospho-beta-D-ribosyl)acetamidine + ATP = 5-amino-1-(5-phospho-beta-D-ribosyl)imidazole + ADP + phosphate + H(+). The protein operates within purine metabolism; IMP biosynthesis via de novo pathway; 5-amino-1-(5-phospho-D-ribosyl)imidazole from N(2)-formyl-N(1)-(5-phospho-D-ribosyl)glycinamide: step 2/2. This Geobacillus thermodenitrificans (strain NG80-2) protein is Phosphoribosylformylglycinamidine cyclo-ligase.